Here is an 87-residue protein sequence, read N- to C-terminus: Small ribosomal subunit protein bS18 (87 aa).

The span at 1–19 (MSTRSRARKRSRVRSRTRR) shows a compositional bias: basic residues. The segment at 1-25 (MSTRSRARKRSRVRSRTRRKDPIFV) is disordered.

The protein belongs to the bacterial ribosomal protein bS18 family. In terms of assembly, part of the 30S ribosomal subunit. Forms a tight heterodimer with protein bS6.

In terms of biological role, binds as a heterodimer with protein bS6 to the central domain of the 16S rRNA, where it helps stabilize the platform of the 30S subunit. This chain is Small ribosomal subunit protein bS18, found in Rhodopirellula baltica (strain DSM 10527 / NCIMB 13988 / SH1).